A 192-amino-acid chain; its full sequence is Small ribosomal subunit protein uS4B (192 aa).

The S4 RNA-binding domain occupies 83-145; it reads RRLDNLVYRL…SRKIQTYASN (63 aa).

It belongs to the universal ribosomal protein uS4 family. Part of the 30S ribosomal subunit. Contacts protein S5. The interaction surface between S4 and S5 is involved in control of translational fidelity.

Its function is as follows. One of the primary rRNA binding proteins, it binds directly to 16S rRNA where it nucleates assembly of the body of the 30S subunit. Functionally, with S5 and S12 plays an important role in translational accuracy. The protein is Small ribosomal subunit protein uS4B (rpsD2) of Clostridium acetobutylicum (strain ATCC 824 / DSM 792 / JCM 1419 / IAM 19013 / LMG 5710 / NBRC 13948 / NRRL B-527 / VKM B-1787 / 2291 / W).